We begin with the raw amino-acid sequence, 554 residues long: MASPPAHRSSKAADEELPKASSTFHPSLWGSFFLTYQPPTAPQRANMKERAEVLRERVRKVLKGSTTDQLPETVNLILTLQRLGLGYYYENEIDKLLHQIYSNSDYNVKDLNLVSQRFYLLRKNGYDVPSDVFLSFKTEEGGFACAAADTRSLLSLYNAAYLWKHGEEVLDEAISSTRLRLQDLLGRLLPESPFAKEVSSSLRTPLFRRVGILEARNYIPIYETEATRNEAVLELAKLNFNLQQLDFCEELKHCSAWWNEMIAKSKLTFVRDRIVEEYFWMNGACYDPPYSLSRIILTKITGLITIIDDMFDTHGTTEDCMKFAEAFGRWDESAIHLLPEYMKDFYILMLETFQSFEDALGPEKSYRVLYLKQAMERLVELYTKEIKWRDEDYVATMSEHLQVSAESIGANALTCSAYAGMGDMSITKETFEWALSFPQFIRTFGSFVRLSNDVVSTKREQTKDHSPSTVHCYMKEHGITMDDACEKIKELIEDSWKDMLEQSLALKGLPKVVPQLVFDFSRTTDNMYRDRDALTSSEALKEMIQLLFVEPIPE.

Mg(2+)-binding residues include Asp308 and Asp312. 4 residues coordinate substrate: Asp308, Asp312, Arg449, and Asn452. A DDXXD motif motif is present at residues 308–312 (DDMFD). Positions 452, 456, and 460 each coordinate Mg(2+).

The protein belongs to the terpene synthase family. Monomer. Mg(2+) is required as a cofactor. Requires Mn(2+) as cofactor.

It localises to the cytoplasm. The protein operates within secondary metabolite biosynthesis; terpenoid biosynthesis. Non-functional sesquiterpene synthase having less than 1% of the activity found in TPS5A. The chain is Inactive sesquithujene synthase B from Zea mays (Maize).